The following is a 486-amino-acid chain: Kynurenine 3-monooxygenase (486 aa).

Helical transmembrane passes span 401-424 (LLFW…HMRY) and 437-459 (ILTR…LCYR).

It belongs to the aromatic-ring hydroxylase family. KMO subfamily. FAD serves as cofactor.

The protein resides in the mitochondrion. It localises to the membrane. The catalysed reaction is L-kynurenine + NADPH + O2 + H(+) = 3-hydroxy-L-kynurenine + NADP(+) + H2O. Its pathway is cofactor biosynthesis; NAD(+) biosynthesis; quinolinate from L-kynurenine: step 1/3. Its function is as follows. Catalyzes the hydroxylation of L-kynurenine (L-Kyn) to form 3-hydroxy-L-kynurenine (L-3OHKyn). Required for synthesis of quinolinic acid. The chain is Kynurenine 3-monooxygenase (kh) from Anopheles gambiae (African malaria mosquito).